A 504-amino-acid polypeptide reads, in one-letter code: UDP-N-acetylmuramoylalanine--D-glutamate ligase (504 aa).

129-135 (GTNGKTT) is a binding site for ATP.

It belongs to the MurCDEF family.

The protein localises to the cytoplasm. It catalyses the reaction UDP-N-acetyl-alpha-D-muramoyl-L-alanine + D-glutamate + ATP = UDP-N-acetyl-alpha-D-muramoyl-L-alanyl-D-glutamate + ADP + phosphate + H(+). Its pathway is cell wall biogenesis; peptidoglycan biosynthesis. Cell wall formation. Catalyzes the addition of glutamate to the nucleotide precursor UDP-N-acetylmuramoyl-L-alanine (UMA). In Cupriavidus metallidurans (strain ATCC 43123 / DSM 2839 / NBRC 102507 / CH34) (Ralstonia metallidurans), this protein is UDP-N-acetylmuramoylalanine--D-glutamate ligase.